A 634-amino-acid polypeptide reads, in one-letter code: uncharacterized protein (634 aa).

The first 40 residues, 1–40 (MWLQQRLKGLPGLLSSSWARRLLCLLGLLLLLLWFGGSGA), serve as a signal peptide directing secretion. At 41–589 (RRAAGGLHLL…DEHMAQQDPG (549 aa)) the chain is on the extracellular side. N-linked (GlcNAc...) asparagine glycosylation occurs at Asn363. A helical transmembrane segment spans residues 590-610 (LPFLFWFSVASLITLFHLFLF). At 611-634 (KLIYNEYCGPGAKPLFRSKEDPSV) the chain is on the cytoplasmic side.

Its subcellular location is the membrane. This is an uncharacterized protein from Homo sapiens (Human).